The primary structure comprises 507 residues: Fluoroacetaldehyde dehydrogenase (507 aa).

219 to 225 is a binding site for NAD(+); the sequence is GFGIEAG. Residues glutamate 263 and cysteine 302 contribute to the active site.

It belongs to the aldehyde dehydrogenase family. Homotetramer.

It carries out the reaction fluoroacetaldehyde + NAD(+) + H2O = fluoroacetate + NADH + 2 H(+). Its function is as follows. Catalyzes the oxidation of fluoroacetaldehyde to fluoroacetate. Has high affinity for fluoroacetate and glycolaldehyde but not for acetaldehyde. The chain is Fluoroacetaldehyde dehydrogenase from Streptantibioticus cattleyicolor (strain ATCC 35852 / DSM 46488 / JCM 4925 / NBRC 14057 / NRRL 8057) (Streptomyces cattleya).